A 147-amino-acid polypeptide reads, in one-letter code: Hemoglobin subunit epsilon (147 aa).

Residues His3–His147 enclose the Globin domain. Residues Ser14 and Ser51 each carry the phosphoserine modification. Positions 64 and 93 each coordinate heme b.

It belongs to the globin family. As to quaternary structure, heterotetramer of two alpha chains and two epsilon chains in early embryonic hemoglobin Gower-2; two zeta chains and two epsilon chains in early embryonic hemoglobin Gower-1. Red blood cells.

Its function is as follows. The epsilon chain is a beta-type chain of early mammalian embryonic hemoglobin. The sequence is that of Hemoglobin subunit epsilon (HBE1) from Otolemur crassicaudatus (Brown greater galago).